We begin with the raw amino-acid sequence, 706 residues long: Cyclic nucleotide-gated ion channel 18 (706 aa).

At 1–53 (MNKIRSLRCLLPETITSASTAASNRGSDGSQFSVLWRHQILDPDSNIVTYWNH) the chain is on the cytoplasmic side. The chain crosses the membrane as a helical span at residues 54 to 74 (VFLITSILALFLDPFYFYVPY). At 75–86 (VGGPACLSIDIS) the chain is on the extracellular side. The chain crosses the membrane as a helical span at residues 87-107 (LAATVTFFRTVADIFHLLHIF). Residues 108–142 (MKFRTAFVARSSRVFGRGELVMDSREIAMRYLKTD) lie on the Cytoplasmic side of the membrane. The chain crosses the membrane as a helical span at residues 143–163 (FLIDVAAMLPLPQLVIWLVIP). The Extracellular segment spans residues 164–174 (AATNGTANHAN). A helical membrane pass occupies residues 175 to 195 (STLALIVLVQYIPRSFIIFPL). Over 196–217 (NQRIIKTTGFIAKTAWAGAAYN) the chain is Cytoplasmic. Residues 218 to 238 (LLLYILASHVLGAMWYLSSIG) traverse the membrane as a helical segment. At 239–345 (RQFSCWSNVC…ITTSVYLGET (107 aa)) the chain is on the extracellular side. Residues 346 to 366 (LFCITICIFGLILFTLLIGNM) form a helical membrane-spanning segment. Over 367-706 (QSSLQSMSVR…PDFSIDKEDV (340 aa)) the chain is Cytoplasmic. A nucleoside 3',5'-cyclic phosphate-binding positions include 449–579 (FFSQ…AFRY) and E520. The interval 565–580 (FKRLQSKKLQHAFRYY) is calmodulin-binding. In terms of domain architecture, IQ spans 585-614 (RAWGACFVQSAWRRYKRRKLAKELSLHESS). The segment at 661-706 (ANTRRGTNQKASSSSTGKKDGSSTSLKMPQLFKPDEPDFSIDKEDV) is disordered. Over residues 693–706 (KPDEPDFSIDKEDV) the composition is skewed to basic and acidic residues.

The protein belongs to the cyclic nucleotide-gated cation channel (TC 1.A.1.5) family. As to quaternary structure, homomultimer. Interacts with CPK32. In terms of tissue distribution, expressed in pollen grains. Not detected in leaves, roots or root hairs.

It localises to the cell membrane. The protein resides in the cytoplasmic vesicle membrane. Cyclic nucleotide-gated ion channel required for directional pollen tube growth into the transmitting tract. Acts as a Ca(2+)-permeable divalent cation-selective channel inhibited by either lanthanum or gadolinium. Regulated by CPK32 to mediate Ca(2+) transport across the plasma membrane in response to Ca(2+) oscillation. This Arabidopsis thaliana (Mouse-ear cress) protein is Cyclic nucleotide-gated ion channel 18.